The sequence spans 233 residues: Probable F-box protein At3g56670 (233 aa).

In terms of domain architecture, F-box spans 22–69; the sequence is HGGVIDIPLNTDSGVTKNTPGEIALLRFKSVSKLWSSIISSRRDFIES.

The polypeptide is Probable F-box protein At3g56670 (Arabidopsis thaliana (Mouse-ear cress)).